The sequence spans 626 residues: Myelin-associated glycoprotein (626 aa).

Residues 1–19 (MIFLTALPLFWIMISASRG) form the signal peptide. The interaction with RTN4R and RTN4RL2 stretch occupies residues 20 to 325 (GHWGAWMPSS…RTVGLSVMYA (306 aa)). Residues 20 to 516 (GHWGAWMPSS…HRLMWAKIGP (497 aa)) are Extracellular-facing. The Ig-like V-type domain occupies 22–120 (WGAWMPSSIS…LGGKYYFRGD (99 aa)). Disulfide bonds link cysteine 37–cysteine 165, cysteine 42–cysteine 100, and cysteine 159–cysteine 217. 65-67 (YPK) provides a ligand contact to a ganglioside GT1b (d18:1(4E)). The N-linked (GlcNAc...) asparagine glycan is linked to asparagine 99. Asparagine 106 carries an N-linked (GlcNAc...) asparagine; partial glycan. A ganglioside GT1b (d18:1(4E)) is bound by residues arginine 118 and 124 to 128 (YNQYT). 4 consecutive Ig-like C2-type domains span residues 139–237 (NTPN…MDVK), 241–325 (VIVE…VMYA), 327–412 (WKPT…VEFA), and 413–508 (PVLL…GAHR). N-linked (GlcNAc...) asparagine glycosylation is found at asparagine 223 and asparagine 246. A disulfide bridge links cysteine 261 with cysteine 305. The N-linked (GlcNAc...) asparagine glycan is linked to asparagine 315. A disulfide bond links cysteine 347 and cysteine 392. Asparagine 406 is a glycosylation site (N-linked (GlcNAc...) asparagine). Intrachain disulfides connect cysteine 421–cysteine 430 and cysteine 432–cysteine 488. N-linked (GlcNAc...) asparagine glycosylation is found at asparagine 450 and asparagine 454. A helical transmembrane segment spans residues 517-536 (VGAVVAFAILIAIVCYITQT). Residue cysteine 531 is the site of S-palmitoyl cysteine attachment. Over 537–626 (RRKKNVTESP…LAEYAEIRVK (90 aa)) the chain is Cytoplasmic. Phosphoserine is present on residues serine 545, serine 547, and serine 549. Residues 577–626 (LGSERRLLGLRGEPPELDLSYSHSDLGKRPTKDSYTLTEELAEYAEIRVK) form a required for normal axon myelination in the central nervous system region. The tract at residues 582–608 (RLLGLRGEPPELDLSYSHSDLGKRPTK) is disordered.

This sequence belongs to the immunoglobulin superfamily. SIGLEC (sialic acid binding Ig-like lectin) family. Monomer and homodimer. Interacts (via the first three N-terminal Ig-like domains) with RTN4R and RTN4RL2. Interacts with RTN4R. Interacts with isoform 2 of BSG. Post-translationally, N-glycosylated. In terms of processing, phosphorylated on tyrosine residues. Ubiquitinated, leading to proteasomal degradation. Both isoform 1 and isoform 2 are detected in myelinated structures in the central and peripheral nervous system, in periaxonal myelin and at Schmidt-Lanterman incisures. Detected in optic nerve, in oligodendroglia and in periaxonal myelin sheaths. Detected in compact myelin (at protein level). Both isoform 1 and isoform 2 are detected in the central and peripheral nervous system.

It is found in the cell membrane. It localises to the membrane raft. In terms of biological role, adhesion molecule that mediates interactions between myelinating cells and neurons by binding to neuronal sialic acid-containing gangliosides and to the glycoproteins RTN4R and RTN4RL2. Not required for initial myelination, but seems to play a role in the maintenance of normal axon myelination. Protects motoneurons against apoptosis, also after injury; protection against apoptosis is probably mediated via interaction with neuronal RTN4R and RTN4RL2. Required to prevent degeneration of myelinated axons in adults; this probably depends on binding to gangliosides on the axon cell membrane. Negative regulator of neurite outgrowth; in dorsal root ganglion neurons the inhibition is mediated primarily via binding to neuronal RTN4R or RTN4RL2 and to a lesser degree via binding to neuronal gangliosides. In cerebellar granule cells the inhibition is mediated primarily via binding to neuronal gangliosides. In sensory neurons, inhibition of neurite extension depends only partially on RTN4R, RTN4RL2 and gangliosides. Inhibits axon longitudinal growth. Inhibits axon outgrowth by binding to RTN4R. Preferentially binds to alpha-2,3-linked sialic acid. Binds ganglioside Gt1b. The sequence is that of Myelin-associated glycoprotein (MAG) from Homo sapiens (Human).